The following is a 461-amino-acid chain: Bifunctional protein GlmU (461 aa).

The interval 1–229 (MEKYVVVLAA…FSESLGVNDR (229 aa)) is pyrophosphorylase. Residues 8 to 11 (LAAG), Lys-22, Gln-72, and 77 to 78 (GT) contribute to the UDP-N-acetyl-alpha-D-glucosamine site. A Mg(2+)-binding site is contributed by Asp-102. Gly-139, Glu-154, Asn-169, and Asn-227 together coordinate UDP-N-acetyl-alpha-D-glucosamine. A Mg(2+)-binding site is contributed by Asn-227. The tract at residues 230–250 (IALAEATRIMQRRINEGHMRD) is linker. The tract at residues 251-461 (GVTFIDPATA…LPLSEDEEWK (211 aa)) is N-acetyltransferase. UDP-N-acetyl-alpha-D-glucosamine is bound by residues Arg-332 and Lys-350. His-362 functions as the Proton acceptor in the catalytic mechanism. UDP-N-acetyl-alpha-D-glucosamine is bound by residues Tyr-365 and Asn-376. The acetyl-CoA site is built by Ala-422 and Arg-439.

In the N-terminal section; belongs to the N-acetylglucosamine-1-phosphate uridyltransferase family. The protein in the C-terminal section; belongs to the transferase hexapeptide repeat family. In terms of assembly, homotrimer. It depends on Mg(2+) as a cofactor.

The protein resides in the cytoplasm. The enzyme catalyses alpha-D-glucosamine 1-phosphate + acetyl-CoA = N-acetyl-alpha-D-glucosamine 1-phosphate + CoA + H(+). It catalyses the reaction N-acetyl-alpha-D-glucosamine 1-phosphate + UTP + H(+) = UDP-N-acetyl-alpha-D-glucosamine + diphosphate. The protein operates within nucleotide-sugar biosynthesis; UDP-N-acetyl-alpha-D-glucosamine biosynthesis; N-acetyl-alpha-D-glucosamine 1-phosphate from alpha-D-glucosamine 6-phosphate (route II): step 2/2. Its pathway is nucleotide-sugar biosynthesis; UDP-N-acetyl-alpha-D-glucosamine biosynthesis; UDP-N-acetyl-alpha-D-glucosamine from N-acetyl-alpha-D-glucosamine 1-phosphate: step 1/1. It functions in the pathway bacterial outer membrane biogenesis; LPS lipid A biosynthesis. Its function is as follows. Catalyzes the last two sequential reactions in the de novo biosynthetic pathway for UDP-N-acetylglucosamine (UDP-GlcNAc). The C-terminal domain catalyzes the transfer of acetyl group from acetyl coenzyme A to glucosamine-1-phosphate (GlcN-1-P) to produce N-acetylglucosamine-1-phosphate (GlcNAc-1-P), which is converted into UDP-GlcNAc by the transfer of uridine 5-monophosphate (from uridine 5-triphosphate), a reaction catalyzed by the N-terminal domain. In Lactobacillus delbrueckii subsp. bulgaricus (strain ATCC BAA-365 / Lb-18), this protein is Bifunctional protein GlmU.